Consider the following 357-residue polypeptide: UDP-N-acetylglucosamine--N-acetylmuramyl-(pentapeptide) pyrophosphoryl-undecaprenol N-acetylglucosamine transferase (357 aa).

Arg-166, Ser-196, and Gln-290 together coordinate UDP-N-acetyl-alpha-D-glucosamine.

This sequence belongs to the glycosyltransferase 28 family. MurG subfamily.

The protein resides in the cell membrane. It catalyses the reaction Mur2Ac(oyl-L-Ala-gamma-D-Glu-L-Lys-D-Ala-D-Ala)-di-trans,octa-cis-undecaprenyl diphosphate + UDP-N-acetyl-alpha-D-glucosamine = beta-D-GlcNAc-(1-&gt;4)-Mur2Ac(oyl-L-Ala-gamma-D-Glu-L-Lys-D-Ala-D-Ala)-di-trans,octa-cis-undecaprenyl diphosphate + UDP + H(+). The protein operates within cell wall biogenesis; peptidoglycan biosynthesis. Cell wall formation. Catalyzes the transfer of a GlcNAc subunit on undecaprenyl-pyrophosphoryl-MurNAc-pentapeptide (lipid intermediate I) to form undecaprenyl-pyrophosphoryl-MurNAc-(pentapeptide)GlcNAc (lipid intermediate II). The sequence is that of UDP-N-acetylglucosamine--N-acetylmuramyl-(pentapeptide) pyrophosphoryl-undecaprenol N-acetylglucosamine transferase from Staphylococcus epidermidis (strain ATCC 35984 / DSM 28319 / BCRC 17069 / CCUG 31568 / BM 3577 / RP62A).